We begin with the raw amino-acid sequence, 37 residues long: Large ribosomal subunit protein bL36 (37 aa).

This sequence belongs to the bacterial ribosomal protein bL36 family.

The chain is Large ribosomal subunit protein bL36 from Aliarcobacter butzleri (strain RM4018) (Arcobacter butzleri).